The following is a 66-amino-acid chain: Vesicular acetylcholine transporter (66 aa).

Residues 1–15 (GMGLANLLYAPVLLL) traverse the membrane as a helical segment. Residues 16–66 (LRNVGLLTRSRSERDVLLDEPPQGLYDAVRLRERPVSGQDGEPRSPPGPFD) lie on the Cytoplasmic side of the membrane. Residues 43-66 (AVRLRERPVSGQDGEPRSPPGPFD) are disordered.

This sequence belongs to the major facilitator superfamily. Vesicular transporter family. As to quaternary structure, interacts with SEC14L1.

It is found in the cytoplasmic vesicle. The protein resides in the secretory vesicle. It localises to the synaptic vesicle membrane. The enzyme catalyses acetylcholine(out) + 2 H(+)(in) = acetylcholine(in) + 2 H(+)(out). It carries out the reaction choline(in) + 2 H(+)(out) = choline(out) + 2 H(+)(in). The catalysed reaction is serotonin(in) + 2 H(+)(out) = serotonin(out) + 2 H(+)(in). Functionally, electrogenic antiporter that exchanges one cholinergic neurotransmitter, acetylcholine or choline, with two intravesicular protons across the membrane of synaptic vesicles. Uses the electrochemical proton gradient established by the V-type proton-pump ATPase to store neurotransmitters inside the vesicles prior to their release via exocytosis. Determines cholinergic vesicular quantal size at presynaptic nerve terminals in developing neuro-muscular junctions with an impact on motor neuron differentiation and innervation pattern. Part of forebrain cholinergic system, regulates hippocampal synapse transmissions that underlie spatial memory formation. Can transport serotonin. The sequence is that of Vesicular acetylcholine transporter (SLC18A3) from Macaca fuscata fuscata (Japanese macaque).